A 1101-amino-acid chain; its full sequence is Cytospin-A (1101 aa).

Disordered stretches follow at residues 1–170 (MRKA…NQIS) and 280–366 (SDCG…SGNA). 2 stretches are compositionally biased toward polar residues: residues 29–48 (ESSA…LSKA) and 64–86 (ASNS…TAMS). Low complexity predominate over residues 93-110 (RSSAGSSSNTKRSGSSGA). Composition is skewed to basic and acidic residues over residues 114–125 (GSSRERLRERSR) and 151–165 (GRTD…KSKS). A coiled-coil region spans residues 162 to 254 (KSKSDNQISD…LKDRLNALGF (93 aa)). Over residues 333-355 (LTSSDDALDAPSSSSESEGLPST) the composition is skewed to low complexity. 2 coiled-coil regions span residues 373-427 (CLTE…MDSL) and 492-785 (QHLS…RGRV). The disordered stretch occupies residues 923 to 978 (SISVSRRSSEELKRDISVPDGSSAPSLMVMTSPSPQLSLSSSSPTASVTPTARSRI). Residues 929–939 (RSSEELKRDIS) show a composition bias toward basic and acidic residues. Low complexity predominate over residues 953–975 (TSPSPQLSLSSSSPTASVTPTAR). Residues 995–1100 (GSKRNALLKW…YVTSIYKYFE (106 aa)) form the Calponin-homology (CH) domain.

This sequence belongs to the cytospin-A family. May interact with both microtubules and actin cytoskeleton.

The protein localises to the cytoplasm. It localises to the cytoskeleton. It is found in the spindle. Its subcellular location is the cell junction. The protein resides in the gap junction. Involved in cytokinesis and spindle organization. May play a role in actin cytoskeleton organization and microtubule stabilization and hence required for proper cell adhesion and migration. The chain is Cytospin-A (specc1l) from Xenopus tropicalis (Western clawed frog).